The primary structure comprises 141 residues: Mu-like prophage FluMu protein gp36 (141 aa).

The protein to phage Mu protein gp36.

In Haemophilus influenzae (strain ATCC 51907 / DSM 11121 / KW20 / Rd), this protein is Mu-like prophage FluMu protein gp36.